The primary structure comprises 1047 residues: Helicase-like transcription factor CHR27 (1047 aa).

Low complexity predominate over residues 1–11; that stretch reads MDSAIEISSGS. Disordered regions lie at residues 1 to 89, 103 to 130, and 145 to 174; these read MDSA…SGSG, RTLPPSFNSPPLPARSGTNNISNASGSR, and KRTLPPSFNPPPLPSRSGTNNIRNAGGSRF. 2 stretches are compositionally biased toward polar residues: residues 52 to 88 and 118 to 128; these read TNQAPPNGASSDTSRPGVSKPFTGNGNTVNSRISSGS and SGTNNISNASG. The Helicase ATP-binding domain occupies 296-597; it reads ETSSFNCPGG…YSYFRFLRYD (302 aa). 309–316 serves as a coordination point for ATP; it reads DDQGLGKT. Disordered stretches follow at residues 349-407 and 511-533; these read ADDE…TRAF and VGASKKSKRRGRKSTNDTSSEPD. A compositionally biased stretch (basic and acidic residues) spans 354–368; it reads DNAKHESGSHVKPEL. The span at 370-379 shows a compositional bias: polar residues; it reads VSSNSETSVL. Acidic residues predominate over residues 385–400; the sequence is DENDSSDMEKAEDEEA. The segment covering 511–523 has biased composition (basic residues); it reads VGASKKSKRRGRK. The segment at 751-790 adopts an RING-type; degenerate zinc-finger fold; the sequence is CYECNEPPEKPVVTLCGHIFCYECVLEYITGDENTCPVPR. Residues 851–868 are compositionally biased toward polar residues; the sequence is QPDSPNSAQHGQMPSSSR. A disordered region spans residues 851-873; that stretch reads QPDSPNSAQHGQMPSSSRPYDDD. Residues 887 to 1042 enclose the Helicase C-terminal domain; it reads SPSQGAVKTI…ATRLTVDDLK (156 aa).

This sequence belongs to the SNF2/RAD54 helicase family. RAD16 subfamily. In terms of assembly, interacts with SUVR2. Interacts with itself.

Its subcellular location is the nucleus. In terms of biological role, probable helicase-like transcription factor involved in transcriptional gene silencing. Associates with SUVR2 and contributes to transcriptional gene silencing at RNA-directed DNA methylation (RdDM) target loci but also at RdDM-independent target loci. May be involved in nucleosome positioning to form ordered nucleosome arrays on chromatin. Associates with SUVR2 and functions redundantly with FRG2. Required for the efficient methylation of a broad range of RdDM target loci. This is Helicase-like transcription factor CHR27 from Arabidopsis thaliana (Mouse-ear cress).